We begin with the raw amino-acid sequence, 113 residues long: MNTVRVTFLLVFVLAVSLGQADKDENRMEMQEKTEQGKGYLDFAENLLPQKLEELEAKLLEEDSEESRNSRQKRCIGEGVPCDENDPRCCSGLVCLKPTLHGIWYKSYYCYKK.

Residues 1-21 (MNTVRVTFLLVFVLAVSLGQA) form the signal peptide. Residues 22 to 74 (DKDENRMEMQEKTEQGKGYLDFAENLLPQKLEELEAKLLEEDSEESRNSRQKR) constitute a propeptide that is removed on maturation. The span at 59-69 (LLEEDSEESRN) shows a compositional bias: basic and acidic residues. The tract at residues 59–83 (LLEEDSEESRNSRQKRCIGEGVPCD) is disordered. Intrachain disulfides connect C75–C90, C82–C95, and C89–C110.

This sequence belongs to the neurotoxin 14 (magi-1) family. 01 (HNTX-16) subfamily. Expressed by the venom gland.

It is found in the secreted. In terms of biological role, probable ion channel inhibitor. This chain is U11-theraphotoxin-Hhn1a, found in Cyriopagopus hainanus (Chinese bird spider).